A 231-amino-acid chain; its full sequence is ABC transporter ATP-binding protein YtrE (231 aa).

The ABC transporter domain occupies 4–231; the sequence is VQHIDHSFTI…VLKGGITVEV (228 aa). 42–49 contacts ATP; the sequence is GRSGSGKS.

Belongs to the ABC transporter superfamily. As to quaternary structure, the complex is composed of 2 ATP-binding proteins (YtrB and YtrE), 2 transmembrane proteins (YtrC and YtrD) and a solute-binding protein (YtrF).

The protein resides in the cell membrane. In terms of biological role, part of the ABC transporter complex YtrBCDEF that plays a role in acetoin utilization during stationary phase and sporulation. The chain is ABC transporter ATP-binding protein YtrE (ytrE) from Bacillus subtilis (strain 168).